The primary structure comprises 775 residues: Chitin synthase 6 (775 aa).

Helical transmembrane passes span 19 to 39, 54 to 74, 94 to 114, 441 to 461, 470 to 490, and 498 to 518; these read VLLMACLEWFLWLAAFLYCLV, CIIVGTAFVLLRVIFLPIMVV, LQWFAFWAFAILLTVPWLFCI, FMQNTIRTTALLFFVMVLAIM, LPVGFIAISLGLNWMLMLYFG, and IWLYPLMFILNPFYNWYYMVY. Low complexity predominate over residues 532 to 541; sequence RADAAAADSH. Disordered stretches follow at residues 532–603 and 702–775; these read RADA…DGKF and PSAF…KTSR. Basic and acidic residues predominate over residues 542–556; it reads TTAREAAEQAEKQGD. Residues 577 to 586 are compositionally biased toward polar residues; that stretch reads NRESTTTSEL. Residues 702 to 713 show a composition bias toward low complexity; it reads PSAFPHAHSASA. Residue Asn724 is glycosylated (N-linked (GlcNAc...) asparagine). A compositionally biased stretch (basic and acidic residues) spans 732 to 741; sequence RSEDIQRFSE. The span at 754–763 shows a compositional bias: polar residues; the sequence is SRNVGNSSFA. N-linked (GlcNAc...) asparagine glycosylation is present at Asn759. A compositionally biased stretch (basic residues) spans 766–775; the sequence is MAKRTPKTSR.

It belongs to the chitin synthase family. Class VII subfamily.

It is found in the cell membrane. The enzyme catalyses [(1-&gt;4)-N-acetyl-beta-D-glucosaminyl](n) + UDP-N-acetyl-alpha-D-glucosamine = [(1-&gt;4)-N-acetyl-beta-D-glucosaminyl](n+1) + UDP + H(+). Functionally, polymerizes chitin, a structural polymer of the cell wall and septum, by transferring the sugar moiety of UDP-GlcNAc to the non-reducing end of the growing chitin polymer. Shows additive effects in septum formation with CHS1, CHS2, CHS3A, CHS4, CHS5 and CHS7. Involved in virulence and mediates mycotoxin deoxinivalenol (DON) biosynthesis via the regulation of the expression of TRI4, TRI5 and TRI6. In Gibberella zeae (strain ATCC MYA-4620 / CBS 123657 / FGSC 9075 / NRRL 31084 / PH-1) (Wheat head blight fungus), this protein is Chitin synthase 6.